The primary structure comprises 116 residues: Large ribosomal subunit protein bL20 (116 aa).

Belongs to the bacterial ribosomal protein bL20 family.

Its function is as follows. Binds directly to 23S ribosomal RNA and is necessary for the in vitro assembly process of the 50S ribosomal subunit. It is not involved in the protein synthesizing functions of that subunit. This Helicobacter pylori (strain ATCC 700392 / 26695) (Campylobacter pylori) protein is Large ribosomal subunit protein bL20 (rplT).